Here is a 245-residue protein sequence, read N- to C-terminus: MIMSSYLINSNYIEPSFPPCEEYHQNGYMPVSSDYYERPKDPGFPHHEEASYPRSNYQEQSYDYGNVSTNDLNDFSDRHHAQPQSVSQNHGPRLTTESCVGSDGNKDCSLVSDALPGSQKSKEPVVYPWMKKVHVNTVTASYSGGVPKRSRTAYTRQQALELEKEFHFNRYLTRRRRVEIAHTMCLSERQVKIWFQNRRMKWKKDHKLPNTKIRSSSSAPSNHHVKTDATQQQQTLLPTPCSSNL.

Residues 34-99 (DYYERPKDPG…HGPRLTTESC (66 aa)) are disordered. Residues 35 to 51 (YYERPKDPGFPHHEEAS) show a composition bias toward basic and acidic residues. Composition is skewed to polar residues over residues 53–73 (PRSN…NDLN) and 82–99 (QPQS…TESC). The Antp-type hexapeptide motif lies at 126–131 (VYPWMK). The segment at residues 147–206 (PKRSRTAYTRQQALELEKEFHFNRYLTRRRRVEIAHTMCLSERQVKIWFQNRRMKWKKDH) is a DNA-binding region (homeobox). Positions 205-245 (DHKLPNTKIRSSSSAPSNHHVKTDATQQQQTLLPTPCSSNL) are disordered. A compositionally biased stretch (polar residues) spans 212–221 (KIRSSSSAPS). A compositionally biased stretch (low complexity) spans 230 to 245 (TQQQQTLLPTPCSSNL).

The protein belongs to the Antp homeobox family. Deformed subfamily.

Its subcellular location is the nucleus. Functionally, sequence-specific transcription factor which is part of a developmental regulatory system that provides cells with specific positional identities on the anterior-posterior axis. The protein is Homeobox protein Hox-A4a (hoxa4a) of Danio rerio (Zebrafish).